Reading from the N-terminus, the 203-residue chain is NADH-quinone oxidoreductase subunit C (203 aa).

Belongs to the complex I 30 kDa subunit family. In terms of assembly, NDH-1 is composed of 14 different subunits. Subunits NuoB, C, D, E, F, and G constitute the peripheral sector of the complex.

Its subcellular location is the cell inner membrane. It carries out the reaction a quinone + NADH + 5 H(+)(in) = a quinol + NAD(+) + 4 H(+)(out). In terms of biological role, NDH-1 shuttles electrons from NADH, via FMN and iron-sulfur (Fe-S) centers, to quinones in the respiratory chain. The immediate electron acceptor for the enzyme in this species is believed to be ubiquinone. Couples the redox reaction to proton translocation (for every two electrons transferred, four hydrogen ions are translocated across the cytoplasmic membrane), and thus conserves the redox energy in a proton gradient. The chain is NADH-quinone oxidoreductase subunit C from Polaromonas sp. (strain JS666 / ATCC BAA-500).